Reading from the N-terminus, the 4749-residue chain is E3 ubiquitin-protein ligase MYCBP2 (4749 aa).

Disordered regions lie at residues 87–127, 170–192, and 609–628; these read DRDQ…RSKS, AASK…SREP, and ASKG…KPYK. A compositionally biased stretch (basic residues) spans 100 to 124; that stretch reads SRNKKILNKKKLKRKQKSKSKVKTR. Ser127, Ser178, Ser181, and Ser183 each carry phosphoserine. 5 RCC1 repeats span residues 600–655, 699–755, 907–957, 958–1009, and 1011–1066; these read DGSV…VISK, NGEV…MMCP, KRDK…VLME, NGDV…LLMD, and QVFT…LRID. Over residues 899–910 the composition is skewed to basic residues; it reads SHPAQLKHKRDK. A disordered region spans residues 899–928; the sequence is SHPAQLKHKRDKHKDGSGDRGEKDASKITT. Residues 911 to 924 are compositionally biased toward basic and acidic residues; the sequence is HKDGSGDRGEKDAS. Residues 1235–1386 are PHR domain 1; it reads NRFESHGGGW…GQIPQLLYRL (152 aa). Ser1621 carries the phosphoserine modification. Residues 1723–1881 are PHR domain 2; it reads NRFTKTSQGR…GQIPQILYYR (159 aa). Residues Cys1745 and Cys1860 are joined by a disulfide bond. The RAE1 binding stretch occupies residues 2018 to 2544; sequence AVIESEHPYK…FNQHLGKSLL (527 aa). 2 disordered regions span residues 2313 to 2336 and 2780 to 3084; these read KKTS…SAAA and QQRQ…KGDG. The Filamin repeat unit spans residues 2331-2438; it reads SPSAAASSAD…IDAGLEVKVK (108 aa). A compositionally biased stretch (polar residues) spans 2780–2803; it reads QQRQLQSDRGTISTSSRPVSTSGK. Positions 2814 to 2832 are enriched in basic and acidic residues; the sequence is VKPDGHVSRTPADQKKPRG. Position 2841 is a phosphoserine (Ser2841). Residues 2847–2857 are compositionally biased toward basic and acidic residues; it reads DAAKLRSDSHS. Polar residues predominate over residues 2858 to 2879; the sequence is RSLSPNHNTLQTLKSDGRTSSG. A phosphoserine mark is found at Ser2859 and Ser2861. 2 stretches are compositionally biased toward low complexity: residues 2884 to 2894 and 2904 to 2917; these read SPGPGSRSSSP and SSPS…SSSP. Phosphoserine is present on residues Ser2905 and Ser2911. The segment covering 2918 to 2929 has biased composition (polar residues); sequence QDKNLPQKSTAP. Positions 2932–2943 are enriched in basic and acidic residues; it reads TKLDPPRERSKS. Phosphoserine occurs at positions 2941, 2943, and 2992. A compositionally biased stretch (polar residues) spans 3008-3021; it reads CTSSTLKTNGVTDS. Composition is skewed to basic and acidic residues over residues 3027–3037 and 3047–3056; these read GDLKSVDEGSN and PLKDEQEMRA. Ser3057 is modified (phosphoserine). Over residues 3060-3073 the composition is skewed to basic residues; it reads ISRKCANRHTRPKK. Residues Ser3162, Ser3550, and Ser3577 each carry the phosphoserine modification. The segment at 3677-3700 is disordered; that stretch reads VEAEEDEDEDNKSNKENAEQEKDT. A compositionally biased stretch (basic and acidic residues) spans 3687-3700; that stretch reads NKSNKENAEQEKDT. One can recognise a DOC domain in the interval 3789–3967; it reads FSISVQSGFE…SVAQQRSCEA (179 aa). The tract at residues 3986 to 4007 is disordered; sequence SGDAEPTPEQEEKALLSSPEGE. Phosphothreonine is present on Thr3992. 2 positions are modified to phosphoserine: Ser4002 and Ser4003. Zn(2+)-binding residues include Cys4499, Cys4502, Cys4517, His4519, His4522, Cys4525, Cys4546, Cys4549, Cys4615, and Cys4618. The RING-type; atypical zinc finger occupies 4499-4550; sequence CMICFTEALSAAPAIQLDCSHVFHLQCCRRVLENRWLGPRITFGFISCPICK. Positions 4610–4747 are tandem cysteine domain; sequence YAYYVCYKCR…LGCGVCRNAH (138 aa). Residue Cys4629 is part of the active site. Positions 4646, 4649, 4658, 4661, 4670, 4673, and 4674 each coordinate Zn(2+). Cys4681 is a catalytic residue. Cys4688, Cys4691, Cys4709, Cys4723, His4729, Cys4740, and Cys4743 together coordinate Zn(2+).

Belongs to the RING-Cys relay (RCR) family. Interacts with MYC. Interacts with TSC2 (tuberin) when TSC2 is in complex with TSC1 (hamartin). Interacts with FBXO45. Interacts with RAE1. Interacts with CPNE1 (via VWFA domain) and CPNE4 (via VWFA domain). Interacts with (sumoylated) RANGAP1; interaction with sumoylated RANGAP1 inhibits E3 ubiquitin-protein ligase activity and promotes MYCBP2 translocation to the nucleus. Interacts with RAN. Interacts with ATP13A2; the interaction inhibits the ubiquitination of TSC2 by MYCBP2. Interacts with USP11. Autoubiquitinated. Expression is mostly restricted to the nervous system, including expression in motor and sensory axons. During postnatal development, expression is particularly strong in the cerebellum, hippocampus and retina. Lower levels of expression are observed throughout the cerebral cortex.

The protein localises to the nucleus. Its subcellular location is the cell projection. It localises to the axon. The protein resides in the cytoplasm. It is found in the cytoskeleton. The catalysed reaction is [E2 ubiquitin-conjugating enzyme]-S-ubiquitinyl-L-cysteine + [acceptor protein]-L-threonine = [E2 ubiquitin-conjugating enzyme]-L-cysteine + [acceptor protein]-3-O-ubiquitinyl-L-threonine.. It functions in the pathway protein modification; protein ubiquitination. Functionally, atypical E3 ubiquitin-protein ligase which specifically mediates ubiquitination of threonine and serine residues on target proteins, instead of ubiquitinating lysine residues. Shows esterification activity towards both threonine and serine, with a preference for threonine, and acts via two essential catalytic cysteine residues that relay ubiquitin to its substrate via thioester intermediates. Interacts with the E2 enzymes UBE2D1, UBE2D3, UBE2E1 and UBE2L3. Plays a key role in neural development, probably by mediating ubiquitination of threonine residues on target proteins. Involved in different processes such as regulation of neurite outgrowth, synaptic growth, synaptogenesis and axon degeneration. Required for the formation of major central nervous system axon tracts. Required for proper axon growth by regulating axon navigation and axon branching: acts by regulating the subcellular location and stability of MAP3K12/DLK. Required for proper localization of retinogeniculate projections but not for eye-specific segregation. Regulates axon guidance in the olfactory system. Involved in Wallerian axon degeneration, an evolutionarily conserved process that drives the loss of damaged axons: acts by promoting destabilization of NMNAT2, probably via ubiquitination of NMNAT2. Catalyzes ubiquitination of threonine and/or serine residues on NMNAT2, consequences of threonine and/or serine ubiquitination are however unknown. Regulates the internalization of TRPV1 in peripheral sensory neurons. May mediate ubiquitination and subsequent proteasomal degradation of TSC2/tuberin. Independently of the E3 ubiquitin-protein ligase activity, also acts as a guanosine exchange factor (GEF) for RAN in neurons of dorsal root ganglia. May function as a facilitator or regulator of transcriptional activation by MYC. Acts in concert with HUWE1 to regulate the circadian clock gene expression by promoting the lithium-induced ubiquination and degradation of NR1D1. The chain is E3 ubiquitin-protein ligase MYCBP2 from Mus musculus (Mouse).